The chain runs to 29 residues: Brevinin-2Td (29 aa).

Cys23 and Cys29 are joined by a disulfide.

Belongs to the frog skin active peptide (FSAP) family. Brevinin subfamily. As to expression, expressed by the skin glands.

It localises to the secreted. Functionally, antibacterial activity against representative Gram-negative and Gram-positive bacteria. This chain is Brevinin-2Td, found in Rana temporaria (European common frog).